Consider the following 435-residue polypeptide: Metacaspase-1A (435 aa).

Disordered regions lie at residues 1 to 46 (MQNH…APPP) and 106 to 129 (YQNPYSHGHQGGPPPPPTDPVAFG). Positions 36–46 (SPQPGYGAPPP) are enriched in pro residues. Residues H231 and C287 contribute to the active site.

Belongs to the peptidase C14B family.

Involved in cell death (apoptosis). In Neosartorya fischeri (strain ATCC 1020 / DSM 3700 / CBS 544.65 / FGSC A1164 / JCM 1740 / NRRL 181 / WB 181) (Aspergillus fischerianus), this protein is Metacaspase-1A (casA).